Consider the following 323-residue polypeptide: L-lactate dehydrogenase (323 aa).

NAD(+) contacts are provided by residues Val18, Asp39, Tyr69, and 83 to 84 (GA). Positions 86 and 92 each coordinate substrate. Residues Ser105, 122–124 (VAN), and Ser147 contribute to the NAD(+) site. Residue 124-127 (NPVD) coordinates substrate. 152–155 (DTGR) provides a ligand contact to substrate. His179 serves as the catalytic Proton acceptor. A Phosphotyrosine modification is found at Tyr223. Thr232 contributes to the substrate binding site.

This sequence belongs to the LDH/MDH superfamily. LDH family. Homotetramer.

Its subcellular location is the cytoplasm. The enzyme catalyses (S)-lactate + NAD(+) = pyruvate + NADH + H(+). It functions in the pathway fermentation; pyruvate fermentation to lactate; (S)-lactate from pyruvate: step 1/1. With respect to regulation, under neutral conditions, the reaction is stimulated 4-fold by fructose 1,6-bisphosphate (FBP), however the L-lactate dehydrogenase is a nonallosteric enzyme. Calcium and zinc ions at 1 mM stimulate the activity almost 2-fold. Weakly inhibited by cadmium, cobalt and copper ions. In terms of biological role, catalyzes the conversion of lactate to pyruvate. The chain is L-lactate dehydrogenase from Lactobacillus helveticus (Lactobacillus suntoryeus).